The sequence spans 388 residues: Putrescine N-methyltransferase 1 (388 aa).

Composition is skewed to polar residues over residues 1 to 14 (MEVI…STIF), 23 to 39 (GYQN…QNGT), and 46 to 88 (HQNG…GNEL). Residues 1 to 88 (MEVISTNTNG…TISHDNGNEL (88 aa)) are disordered. The region spanning 99 to 336 (PGWFSEFSAL…GVIGYMLCST (238 aa)) is the PABS domain. S-adenosyl-L-methionine-binding positions include Gln-130, Glu-205, and 236-237 (DG). The active-site Proton acceptor is Asp-255. An S-adenosyl-L-methionine-binding site is contributed by Tyr-324.

This sequence belongs to the class I-like SAM-binding methyltransferase superfamily. Spermidine/spermine synthase family. As to expression, mainly expressed in roots.

It carries out the reaction putrescine + S-adenosyl-L-methionine = N-methylputrescine + S-adenosyl-L-homocysteine + H(+). It functions in the pathway alkaloid biosynthesis; nicotine biosynthesis. Its function is as follows. Involved in the biosynthesis of pyridine alkaloid natural products, leading mainly to the production of anabasine, anatabine, nicotine and nornicotine, effective deterrents against herbivores with antiparasitic and pesticide properties (neurotoxins); nornicotine serves as the precursor in the synthesis of the carcinogen compound N'-nitrosonornicotine (NNN). Methyltransferase that mediates the conversion of putrescine to N-methylputrescine. This Nicotiana attenuata (Coyote tobacco) protein is Putrescine N-methyltransferase 1.